An 87-amino-acid polypeptide reads, in one-letter code: Exodeoxyribonuclease 7 small subunit (87 aa).

This sequence belongs to the XseB family. As to quaternary structure, heterooligomer composed of large and small subunits.

It is found in the cytoplasm. The enzyme catalyses Exonucleolytic cleavage in either 5'- to 3'- or 3'- to 5'-direction to yield nucleoside 5'-phosphates.. Functionally, bidirectionally degrades single-stranded DNA into large acid-insoluble oligonucleotides, which are then degraded further into small acid-soluble oligonucleotides. This chain is Exodeoxyribonuclease 7 small subunit, found in Solidesulfovibrio magneticus (strain ATCC 700980 / DSM 13731 / RS-1) (Desulfovibrio magneticus).